The following is a 412-amino-acid chain: ATP phosphoribosyltransferase regulatory subunit (412 aa).

Belongs to the class-II aminoacyl-tRNA synthetase family. HisZ subfamily. In terms of assembly, heteromultimer composed of HisG and HisZ subunits.

The protein resides in the cytoplasm. It participates in amino-acid biosynthesis; L-histidine biosynthesis; L-histidine from 5-phospho-alpha-D-ribose 1-diphosphate: step 1/9. Its function is as follows. Required for the first step of histidine biosynthesis. May allow the feedback regulation of ATP phosphoribosyltransferase activity by histidine. The protein is ATP phosphoribosyltransferase regulatory subunit of Dehalococcoides mccartyi (strain ATCC BAA-2100 / JCM 16839 / KCTC 5957 / BAV1).